A 367-amino-acid polypeptide reads, in one-letter code: Germination protease (367 aa).

The propeptide occupies 1 to 15 (MKEPLDLSKYSVRTD).

This sequence belongs to the peptidase A25 family. In terms of assembly, homotetramer. Autoproteolytically processed. The inactive tetrameric zymogen termed p46 autoprocesses to a smaller form termed p41, which is active only during spore germination.

The catalysed reaction is Endopeptidase action with P4 Glu or Asp, P1 preferably Glu &gt; Asp, P1' hydrophobic and P2' Ala.. Functionally, initiates the rapid degradation of small, acid-soluble proteins during spore germination. The sequence is that of Germination protease from Bacillus cereus (strain ATCC 10987 / NRS 248).